Reading from the N-terminus, the 1412-residue chain is Cardiac-enriched FHL2-interacting protein (1412 aa).

7 disordered regions span residues 106–177, 202–443, 460–500, 517–848, 877–923, 935–1255, and 1344–1412; these read VQGE…PKFA, VSNT…YNPP, LETS…SKAP, YSPL…TNKH, SEDS…VPGT, EDPV…YPAT, and RQGS…EGVS. At Thr-120 the chain carries Phosphothreonine. Over residues 135–145 the composition is skewed to low complexity; the sequence is SSSKPISKVSS. Residues 161–171 are compositionally biased toward pro residues; that stretch reads RPPPSKPPALK. Residues 202-212 show a composition bias toward polar residues; it reads VSNTHQGSHQS. Basic and acidic residues-rich tracts occupy residues 285–299 and 306–316; these read WDTH…KDIA and KAPKHYEDMPL. At Ser-328 the chain carries Phosphoserine. The span at 343–352 shows a compositional bias: polar residues; the sequence is SPSGSQSTSG. Residues 378–389 show a composition bias toward basic residues; sequence KRSKAPWRKPKT. Phosphoserine is present on Ser-473. Composition is skewed to basic and acidic residues over residues 482–496 and 525–538; these read QEKE…DSYK and GFDE…DSKQ. The span at 587–612 shows a compositional bias: low complexity; the sequence is SHPTFSSPSASSQTHFCVNGEAAESN. Basic and acidic residues predominate over residues 632–641; sequence GHPDCRENLP. 3 stretches are compositionally biased toward polar residues: residues 670 to 679, 687 to 697, and 712 to 722; these read NGLSRSVSQE, GFQSLPLNQKF, and SDSQSDFTPCR. Residues 728–741 show a composition bias toward low complexity; that stretch reads FSTSSSDQSFASFE. The segment covering 753–799 has biased composition (basic and acidic residues); the sequence is QEDRKSHVSAGDKQRDETAVEKEESQQCASRNEHRGVDEQRQEEIQR. At Ser-813 the chain carries Phosphoserine. Over residues 826 to 837 the composition is skewed to basic and acidic residues; sequence ADKDTAHTHAKD. Composition is skewed to polar residues over residues 904-921, 943-953, and 1047-1066; these read ASES…NDVP, QDETSQQTRKG, and AETS…SPAA. Residues 1164-1175 show a composition bias toward basic residues; the sequence is RRAKKLASKRRK. Residues 1176–1203 show a composition bias toward basic and acidic residues; that stretch reads SDQLLEKHTEAWEGKSFTEDTQGTERRP. The span at 1401–1412 shows a compositional bias: acidic residues; that stretch reads DDLEDFATEGVS.

Interacts with FHL2. As to expression, expressed in the heart and skeletal muscle (at protein level).

Its subcellular location is the cytoplasm. The protein localises to the myofibril. The protein resides in the sarcomere. It localises to the z line. In terms of biological role, plays an important role in cardiomyocyte hypertrophy via activation of the calcineurin/NFAT signaling pathway. This chain is Cardiac-enriched FHL2-interacting protein, found in Mus musculus (Mouse).